Reading from the N-terminus, the 456-residue chain is Phosphomethylpyrimidine synthase (456 aa).

Substrate contacts are provided by residues N80, M109, Y139, H175, 195–197 (SRG), 236–239 (DSLR), and E275. H279 provides a ligand contact to Zn(2+). Residue Y302 coordinates substrate. A Zn(2+)-binding site is contributed by H343. [4Fe-4S] cluster contacts are provided by C423, C426, and C431.

The protein belongs to the ThiC family. The cofactor is [4Fe-4S] cluster.

The catalysed reaction is 5-amino-1-(5-phospho-beta-D-ribosyl)imidazole + S-adenosyl-L-methionine = 4-amino-2-methyl-5-(phosphooxymethyl)pyrimidine + CO + 5'-deoxyadenosine + formate + L-methionine + 3 H(+). The protein operates within cofactor biosynthesis; thiamine diphosphate biosynthesis. In terms of biological role, catalyzes the synthesis of the hydroxymethylpyrimidine phosphate (HMP-P) moiety of thiamine from aminoimidazole ribotide (AIR) in a radical S-adenosyl-L-methionine (SAM)-dependent reaction. The protein is Phosphomethylpyrimidine synthase of Prochlorococcus marinus (strain MIT 9215).